The sequence spans 181 residues: MTGEHVILLDEQGNPDGILEKYAAHTSDTLLHLAFSCWLFNAQGQLLVTRRSLSKKAWPGVWTNSVCGHPQQGESTEAAIIRRSRFELGVEITNLTPVYPDFRYRATDPNGIVENEVCPVYAAQVTSALQVNPDEVMDYQWSGLETVLQALSAAPWAFSPWMVLQASDDKARELLREYNQG.

Mn(2+) contacts are provided by histidine 25 and histidine 32. Residues leucine 30–leucine 164 form the Nudix hydrolase domain. The active site involves cysteine 67. Mn(2+) is bound at residue histidine 69. Glutamate 87 is a Mg(2+) binding site. The Mn(2+) site is built by glutamate 114 and glutamate 116. Residue glutamate 116 is part of the active site.

Belongs to the IPP isomerase type 1 family. In terms of assembly, homodimer. Mg(2+) is required as a cofactor. The cofactor is Mn(2+).

The protein localises to the cytoplasm. It carries out the reaction isopentenyl diphosphate = dimethylallyl diphosphate. The protein operates within isoprenoid biosynthesis; dimethylallyl diphosphate biosynthesis; dimethylallyl diphosphate from isopentenyl diphosphate: step 1/1. Functionally, catalyzes the 1,3-allylic rearrangement of the homoallylic substrate isopentenyl (IPP) to its highly electrophilic allylic isomer, dimethylallyl diphosphate (DMAPP). The protein is Isopentenyl-diphosphate Delta-isomerase of Citrobacter koseri (strain ATCC BAA-895 / CDC 4225-83 / SGSC4696).